We begin with the raw amino-acid sequence, 403 residues long: MTTEIKVERGLFDEVMVPCYNPMEMIPVRGKGSRIWDQDDNEYIDFAGGIAVSCLGHCHPVMVDALTEQGNKLWHLSNVMTNEPALRLAKKLTEVSFAERVFFANSGAEANEAALKLARRYAADVHGPEKSEIIAFKQGFHGRTFFTVTVGGQAAYSDGFGPKPGDVTHLPYNDIEALQAHMSDRTCAVMMEPLQGEGGIVPPTPEFAQAVRELCDKHNALLIFDEVQTGNGRTGHFYAYQGLGITPDILSTAKSLGGGFPIGAMLTTAKLAEHLKVGTHGSTYGGNPLACAVAEAVVNEVTKPEVLAGVLEREALFRAGLEKINAKYNLFSEVRGKGLLLGAALNEEWQGRARDVLVAAGKQGLLVLVAGANVVRFTPSLVITQQEIEEGLAKLDKAIATLV.

Pyridoxal 5'-phosphate-binding positions include 107 to 108 (GA) and Phe-140. Arg-143 is a N(2)-acetyl-L-ornithine binding site. 225 to 228 (DEVQ) serves as a coordination point for pyridoxal 5'-phosphate. Lys-254 is modified (N6-(pyridoxal phosphate)lysine). Ser-282 lines the N(2)-acetyl-L-ornithine pocket. Thr-283 is a pyridoxal 5'-phosphate binding site.

The protein belongs to the class-III pyridoxal-phosphate-dependent aminotransferase family. ArgD subfamily. As to quaternary structure, homodimer. Pyridoxal 5'-phosphate is required as a cofactor.

It is found in the cytoplasm. The enzyme catalyses N(2)-acetyl-L-ornithine + 2-oxoglutarate = N-acetyl-L-glutamate 5-semialdehyde + L-glutamate. It participates in amino-acid biosynthesis; L-arginine biosynthesis; N(2)-acetyl-L-ornithine from L-glutamate: step 4/4. In Vibrio parahaemolyticus serotype O3:K6 (strain RIMD 2210633), this protein is Acetylornithine aminotransferase.